A 37-amino-acid chain; its full sequence is Putative preoptic regulatory factor 1 (37 aa).

2 consecutive propeptides follow at residues 1–7 (MPYSLQP) and 18–37 (FPLCMYMVRGSTWTLVPPDL).

It belongs to the GnRH family. Preoptic area and testis.

The protein resides in the secreted. Functionally, precursor for a gonadotropin regulatory hormone (GNRH) related decapeptide. This is Putative preoptic regulatory factor 1 (Porf1) from Rattus norvegicus (Rat).